We begin with the raw amino-acid sequence, 363 residues long: GTPase Obg (363 aa).

An Obg domain is found at Met-1 to Leu-159. Positions Ala-160–Gln-341 constitute an OBG-type G domain. Residues Gly-166–Ser-173, Phe-191–His-195, Asp-213–Gly-216, Asn-291–Asp-294, and Ser-322–Leu-324 each bind GTP. Residues Ser-173 and Thr-193 each contribute to the Mg(2+) site. Residues Gly-343–Ala-363 are disordered.

Belongs to the TRAFAC class OBG-HflX-like GTPase superfamily. OBG GTPase family. As to quaternary structure, monomer. Requires Mg(2+) as cofactor.

Its subcellular location is the cytoplasm. Functionally, an essential GTPase which binds GTP, GDP and possibly (p)ppGpp with moderate affinity, with high nucleotide exchange rates and a fairly low GTP hydrolysis rate. Plays a role in control of the cell cycle, stress response, ribosome biogenesis and in those bacteria that undergo differentiation, in morphogenesis control. The polypeptide is GTPase Obg (Verminephrobacter eiseniae (strain EF01-2)).